Here is a 268-residue protein sequence, read N- to C-terminus: MQKRDGHIHTPFCPHGSNDTLRQYAEEALKKGFESITFTEHAPLPPSFTDPTPLKDSAMAQASLERYIHEISGLKKEYRGQLSIRTGLEVDYIAEFEDEITLFLDTYGPYLDDSILSVHFLRTDSSYLCLDYDEHTFKELISACGSIEAVYEQYYRSIYSSIVASLGVYKPKRVGHITLVQKFIKLFPYSMSEHIRGLVSLCLNAIEENGMELDFNTSGLRKTYAGGIYIEDWMLNEAKQKKIPLVFGSDAHQAGDVGYAYEAFLERC.

The protein belongs to the PHP hydrolase family. HisK subfamily.

The catalysed reaction is L-histidinol phosphate + H2O = L-histidinol + phosphate. It functions in the pathway amino-acid biosynthesis; L-histidine biosynthesis; L-histidine from 5-phospho-alpha-D-ribose 1-diphosphate: step 8/9. This is Histidinol-phosphatase (hisK) from Bacillus subtilis (strain 168).